We begin with the raw amino-acid sequence, 296 residues long: 4-diphosphocytidyl-2-C-methyl-D-erythritol kinase (296 aa).

Lysine 22 is an active-site residue. 105–115 (PMGGGLGGGSS) is a binding site for ATP. Aspartate 147 is a catalytic residue.

It belongs to the GHMP kinase family. IspE subfamily.

The enzyme catalyses 4-CDP-2-C-methyl-D-erythritol + ATP = 4-CDP-2-C-methyl-D-erythritol 2-phosphate + ADP + H(+). It participates in isoprenoid biosynthesis; isopentenyl diphosphate biosynthesis via DXP pathway; isopentenyl diphosphate from 1-deoxy-D-xylulose 5-phosphate: step 3/6. Its function is as follows. Catalyzes the phosphorylation of the position 2 hydroxy group of 4-diphosphocytidyl-2C-methyl-D-erythritol. The protein is 4-diphosphocytidyl-2-C-methyl-D-erythritol kinase of Photobacterium profundum (strain SS9).